Here is a 514-residue protein sequence, read N- to C-terminus: ATP synthase subunit alpha (514 aa).

170–177 is an ATP binding site; it reads GDRQIGKT.

The protein belongs to the ATPase alpha/beta chains family. As to quaternary structure, F-type ATPases have 2 components, CF(1) - the catalytic core - and CF(0) - the membrane proton channel. CF(1) has five subunits: alpha(3), beta(3), gamma(1), delta(1), epsilon(1). CF(0) has three main subunits: a(1), b(2) and c(9-12). The alpha and beta chains form an alternating ring which encloses part of the gamma chain. CF(1) is attached to CF(0) by a central stalk formed by the gamma and epsilon chains, while a peripheral stalk is formed by the delta and b chains.

Its subcellular location is the cell inner membrane. The enzyme catalyses ATP + H2O + 4 H(+)(in) = ADP + phosphate + 5 H(+)(out). In terms of biological role, produces ATP from ADP in the presence of a proton gradient across the membrane. The alpha chain is a regulatory subunit. The sequence is that of ATP synthase subunit alpha from Pseudomonas fluorescens (strain ATCC BAA-477 / NRRL B-23932 / Pf-5).